The sequence spans 80 residues: Lantibiotic Flvalpha.c (80 aa).

Positions 1 to 38 are cleaved as a propeptide — cleaved by FlvT; the sequence is MNKNPIYRSEEEAKNIACGNVAAELDENSQALDAINGA. Thr-43 and Thr-47 each carry 2,3-didehydrobutyrine; by FlvM1. The beta-methyllanthionine (Thr-Cys); by FlvM1 cross-link spans 52–55; that stretch reads TLGC. The lanthionine (Ser-Cys); by FlvM1 cross-link spans 58-68; sequence SYGLGNGGYCC. 2 consecutive cross-links (beta-methyllanthionine (Thr-Cys); by FlvM1) follow at residues 69 to 74 and 71 to 78; these read TYTVEC and TVECSKTC.

Post-translationally, the lanthionine formed by Ser-58 and Cys-68 forms a putative lipid II binding motif. Maturation of FlvA1 peptides involves the enzymatic conversion of Thr, and Ser into dehydrated AA and the formation of thioether bonds with cysteines. Modifications are processed by the flavecin synthetase FlvM1. This is followed by membrane translocation and cleavage of the modified precursor. In terms of processing, contains DL-lanthionine and DL-beta-methyllanthionine, when coepressed in E.coli with the flavecin synthetase FlvM1.

The protein localises to the secreted. Functionally, lanthionine-containing peptide antibiotic (lantibiotic) only active on Gram-positive bacteria in synergy with Flvbeta peptides, which are encoded by the same operon than Flvalpha.a. Shows antibacterial activity in synergy with Flvbeta.b, Flvbeta.c, Flvbeta.e and Flvbeta.g. Does not show antibacterial activity when tested with Flvbeta.a, Flvbeta.d, Flvbeta.f and Flvbeta.h. The bactericidal activity of lantibiotics is based on depolarization of energized bacterial cytoplasmic membranes, initiated by the formation of aqueous transmembrane pores. This Ruminococcus flavefaciens protein is Lantibiotic Flvalpha.c.